Consider the following 447-residue polypeptide: Serine/threonine-protein phosphatase 2A 55 kDa regulatory subunit B gamma isoform (447 aa).

7 WD repeats span residues 22–61 (TEAD…KNAP), 87–128 (EIEE…KRPE), 171–209 (GHTY…RSFN), 220–260 (DLTE…LCDK), 279–317 (EIIS…RPIE), 334–375 (ESDC…DVTL), and 410–446 (DFTK…NSDM).

This sequence belongs to the phosphatase 2A regulatory subunit B family. PP2A consists of a common heterodimeric core enzyme, composed of a 36 kDa catalytic subunit (subunit C) and a 65 kDa constant regulatory subunit (PR65 or subunit A), that associates with a variety of regulatory subunits. Proteins that associate with the core dimer include three families of regulatory subunits B (the R2/B/PR55/B55, R3/B''/PR72/PR130/PR59 and R5/B'/B56 families), the 48 kDa variable regulatory subunit, viral proteins, and cell signaling molecules. Interacts with IER5. Highly expressed in brain.

The B regulatory subunit might modulate substrate selectivity and catalytic activity, and might also direct the localization of the catalytic enzyme to a particular subcellular compartment. This Rattus norvegicus (Rat) protein is Serine/threonine-protein phosphatase 2A 55 kDa regulatory subunit B gamma isoform (Ppp2r2c).